The chain runs to 159 residues: Probable chemoreceptor glutamine deamidase CheD 2 (159 aa).

The protein belongs to the CheD family.

The catalysed reaction is L-glutaminyl-[protein] + H2O = L-glutamyl-[protein] + NH4(+). Functionally, probably deamidates glutamine residues to glutamate on methyl-accepting chemotaxis receptors (MCPs), playing an important role in chemotaxis. This Anaeromyxobacter dehalogenans (strain 2CP-C) protein is Probable chemoreceptor glutamine deamidase CheD 2.